The sequence spans 865 residues: Protein translocase subunit SecA (865 aa).

ATP-binding positions include glutamine 93, 111–115, and aspartate 501; that span reads GEGKT. Zn(2+) contacts are provided by cysteine 841, cysteine 843, cysteine 852, and cysteine 853.

It belongs to the SecA family. As to quaternary structure, monomer and homodimer. Part of the essential Sec protein translocation apparatus which comprises SecA, SecYEG and auxiliary proteins SecDF-YajC and YidC. It depends on Zn(2+) as a cofactor.

It localises to the cell inner membrane. The protein resides in the cytoplasm. The catalysed reaction is ATP + H2O + cellular proteinSide 1 = ADP + phosphate + cellular proteinSide 2.. Part of the Sec protein translocase complex. Interacts with the SecYEG preprotein conducting channel. Has a central role in coupling the hydrolysis of ATP to the transfer of proteins into and across the cell membrane, serving as an ATP-driven molecular motor driving the stepwise translocation of polypeptide chains across the membrane. This Helicobacter pylori (strain Shi470) protein is Protein translocase subunit SecA.